Consider the following 316-residue polypeptide: UDP-N-acetylenolpyruvoylglucosamine reductase (316 aa).

Positions 27-225 (VGGKAERFYR…KTAINALLKK (199 aa)) constitute an FAD-binding PCMH-type domain. Arg-190 is a catalytic residue. Ser-239 acts as the Proton donor in catalysis. Glu-309 is a catalytic residue.

The protein belongs to the MurB family. It depends on FAD as a cofactor.

The protein localises to the cytoplasm. It catalyses the reaction UDP-N-acetyl-alpha-D-muramate + NADP(+) = UDP-N-acetyl-3-O-(1-carboxyvinyl)-alpha-D-glucosamine + NADPH + H(+). The protein operates within cell wall biogenesis; peptidoglycan biosynthesis. In terms of biological role, cell wall formation. This Coxiella burnetii (strain CbuG_Q212) (Coxiella burnetii (strain Q212)) protein is UDP-N-acetylenolpyruvoylglucosamine reductase.